A 352-amino-acid chain; its full sequence is Small ribosomal subunit biogenesis GTPase RsgA (352 aa).

The region spanning 109–277 (DTVLKRPDMY…LIDSPGIREF (169 aa)) is the CP-type G domain. GTP-binding positions include 165–168 (NKAD) and 219–227 (GQSGVGKSS). C301, C306, H308, and C314 together coordinate Zn(2+).

It belongs to the TRAFAC class YlqF/YawG GTPase family. RsgA subfamily. As to quaternary structure, monomer. Associates with 30S ribosomal subunit, binds 16S rRNA. The cofactor is Zn(2+).

Its subcellular location is the cytoplasm. One of several proteins that assist in the late maturation steps of the functional core of the 30S ribosomal subunit. Helps release RbfA from mature subunits. May play a role in the assembly of ribosomal proteins into the subunit. Circularly permuted GTPase that catalyzes slow GTP hydrolysis, GTPase activity is stimulated by the 30S ribosomal subunit. The protein is Small ribosomal subunit biogenesis GTPase RsgA of Alcanivorax borkumensis (strain ATCC 700651 / DSM 11573 / NCIMB 13689 / SK2).